We begin with the raw amino-acid sequence, 316 residues long: Vacuolar morphogenesis protein 7 (316 aa).

The PX domain maps to M1–N124. The stretch at R168–K186 forms a coiled coil. One can recognise a t-SNARE coiled-coil homology domain in the interval M250 to F312.

Possibly multimeric. Associates with VAM3.

It localises to the vacuole. In terms of biological role, essential for proper morphogenesis of the vacuole. May exist as structural reinforcement on the surface of the vacuolar membrane and be required for maintenance against rupture by osmotic pressure. In Saccharomyces cerevisiae (strain ATCC 204508 / S288c) (Baker's yeast), this protein is Vacuolar morphogenesis protein 7 (VAM7).